The primary structure comprises 283 residues: Large ribosomal subunit protein uL2 (283 aa).

Positions 215–283 (RHKGIRPTVR…IRGRKKRINN (69 aa)) are disordered. Residues 274–283 (IRGRKKRINN) are compositionally biased toward basic residues.

It belongs to the universal ribosomal protein uL2 family. As to quaternary structure, part of the 50S ribosomal subunit. Forms a bridge to the 30S subunit in the 70S ribosome.

In terms of biological role, one of the primary rRNA binding proteins. Required for association of the 30S and 50S subunits to form the 70S ribosome, for tRNA binding and peptide bond formation. It has been suggested to have peptidyltransferase activity; this is somewhat controversial. Makes several contacts with the 16S rRNA in the 70S ribosome. The protein is Large ribosomal subunit protein uL2 of Mycoplasma mobile (strain ATCC 43663 / 163K / NCTC 11711) (Mesomycoplasma mobile).